The following is a 412-amino-acid chain: Tryptophan 2,3-dioxygenase (412 aa).

Substrate is bound by residues 79–83, Tyr146, and Arg150; that span reads FIVVH. Position 346 (His346) interacts with heme. Thr360 lines the substrate pocket.

It belongs to the tryptophan 2,3-dioxygenase family. Homotetramer. It depends on heme as a cofactor.

The catalysed reaction is L-tryptophan + O2 = N-formyl-L-kynurenine. It functions in the pathway amino-acid degradation; L-tryptophan degradation via kynurenine pathway; L-kynurenine from L-tryptophan: step 1/2. In terms of biological role, heme-dependent dioxygenase that catalyzes the oxidative cleavage of the L-tryptophan (L-Trp) pyrrole ring and converts L-tryptophan to N-formyl-L-kynurenine. Catalyzes the oxidative cleavage of the indole moiety. In Sorangium cellulosum (strain So ce56) (Polyangium cellulosum (strain So ce56)), this protein is Tryptophan 2,3-dioxygenase.